Here is a 245-residue protein sequence, read N- to C-terminus: DNA polymerase sliding clamp (245 aa).

The protein belongs to the PCNA family. In terms of assembly, homotrimer. The subunits circularize to form a toroid; DNA passes through its center. Replication factor C (RFC) is required to load the toroid on the DNA.

Functionally, sliding clamp subunit that acts as a moving platform for DNA processing. Responsible for tethering the catalytic subunit of DNA polymerase and other proteins to DNA during high-speed replication. In Methanosarcina acetivorans (strain ATCC 35395 / DSM 2834 / JCM 12185 / C2A), this protein is DNA polymerase sliding clamp.